A 716-amino-acid chain; its full sequence is Fatty acid oxidation complex subunit alpha (716 aa).

The tract at residues 1–189 (MIYQSPTIQV…KVGAVDAVVA (189 aa)) is enoyl-CoA hydratase/isomerase. Asp-296 provides a ligand contact to substrate. The interval 311–716 (KEVKNAAVLG…ATNNGSYYQA (406 aa)) is 3-hydroxyacyl-CoA dehydrogenase. NAD(+) is bound by residues Met-324, Asp-343, 400 to 402 (VVE), Lys-407, and Ser-429. The For 3-hydroxyacyl-CoA dehydrogenase activity role is filled by His-450. Asn-453 serves as a coordination point for NAD(+). Residues Asn-500 and Tyr-660 each coordinate substrate.

It in the N-terminal section; belongs to the enoyl-CoA hydratase/isomerase family. This sequence in the C-terminal section; belongs to the 3-hydroxyacyl-CoA dehydrogenase family. In terms of assembly, heterotetramer of two alpha chains (FadB) and two beta chains (FadA).

It carries out the reaction a (3S)-3-hydroxyacyl-CoA + NAD(+) = a 3-oxoacyl-CoA + NADH + H(+). The catalysed reaction is a (3S)-3-hydroxyacyl-CoA = a (2E)-enoyl-CoA + H2O. The enzyme catalyses a 4-saturated-(3S)-3-hydroxyacyl-CoA = a (3E)-enoyl-CoA + H2O. It catalyses the reaction (3S)-3-hydroxybutanoyl-CoA = (3R)-3-hydroxybutanoyl-CoA. It carries out the reaction a (3Z)-enoyl-CoA = a 4-saturated (2E)-enoyl-CoA. The catalysed reaction is a (3E)-enoyl-CoA = a 4-saturated (2E)-enoyl-CoA. The protein operates within lipid metabolism; fatty acid beta-oxidation. Its function is as follows. Involved in the aerobic and anaerobic degradation of long-chain fatty acids via beta-oxidation cycle. Catalyzes the formation of 3-oxoacyl-CoA from enoyl-CoA via L-3-hydroxyacyl-CoA. It can also use D-3-hydroxyacyl-CoA and cis-3-enoyl-CoA as substrate. The protein is Fatty acid oxidation complex subunit alpha of Shewanella putrefaciens (strain CN-32 / ATCC BAA-453).